The primary structure comprises 182 residues: Photosystem I assembly protein Ycf4 (182 aa).

2 helical membrane passes run 22–42 and 63–83; these read WSSVIFLGASGFLLTGLSSYL and VMCFYGILGLIFSVYLGLTIF.

Belongs to the Ycf4 family.

The protein localises to the plastid. The protein resides in the chloroplast thylakoid membrane. Its function is as follows. Seems to be required for the assembly of the photosystem I complex. The sequence is that of Photosystem I assembly protein Ycf4 from Oltmannsiellopsis viridis (Marine flagellate).